Reading from the N-terminus, the 511-residue chain is Phosphoenolpyruvate carboxylase (511 aa).

It belongs to the PEPCase type 2 family. In terms of assembly, homotetramer. The cofactor is Mg(2+).

It carries out the reaction oxaloacetate + phosphate = phosphoenolpyruvate + hydrogencarbonate. Catalyzes the irreversible beta-carboxylation of phosphoenolpyruvate (PEP) to form oxaloacetate (OAA), a four-carbon dicarboxylic acid source for the tricarboxylic acid cycle. The polypeptide is Phosphoenolpyruvate carboxylase (Saccharolobus islandicus (strain Y.N.15.51 / Yellowstone #2) (Sulfolobus islandicus)).